The sequence spans 413 residues: MTPSISWCLLLLAGLCCLVPSFLAEDVQETDTSQKDQSPASHEIATNLGDFAISLYRELVHQSNTSNIFFSPVSIATAFAMLSLGSKGDTHTQILEGLQFNLTQTSEADIHNSFQHLLQTLNRPDSELQLSTGNGLFVNNDLKLVEKFLEEAKNHYQAEVFSVNFAESEEAKKVINDFVEKGTQGKIVEAVKKLEQDTVFVLANYILFKGKWKKPFDPENTKQAEFHVDESTTVKVPMMTLSGMLDVHHCSTLSSWVLLMDYAGNATAVFLLPDDGKMQHLEQTLNKELISKFLLNRRRRLAQIHIPRLSISGNYNLETLMSPLGITRIFNSGADLSGITEENAPLKLSQAVHKAVLTIDETGTEAAAATVLQGGFLSMPPILHFNRPFLFIIFEEHSQSPLFVGKVVDPTHK.

The signal sequence occupies residues 1-24 (MTPSISWCLLLLAGLCCLVPSFLA). 3 N-linked (GlcNAc...) asparagine glycosylation sites follow: asparagine 64, asparagine 101, and asparagine 265. An RCL region spans residues 368–387 (AATVLQGGFLSMPPILHFNR).

Belongs to the serpin family.

The protein localises to the secreted. Its function is as follows. Does not inhibit elastase or chymotrypsin. No target protease has been identified to date. This Mus musculus (Mouse) protein is Alpha-1-antitrypsin 1-5 (Serpina1e).